Consider the following 154-residue polypeptide: UPF0547 protein C16orf87 homolog (154 aa).

Positions histidine 46 to glutamate 119 are disordered. The span at valine 68–arginine 84 shows a compositional bias: basic and acidic residues. Position 91 is a phosphoserine (serine 91). Positions lysine 104–lysine 132 form a coiled coil. Positions lysine 109–glutamate 119 are enriched in basic and acidic residues.

Belongs to the UPF0547 family.

The polypeptide is UPF0547 protein C16orf87 homolog (Bos taurus (Bovine)).